The sequence spans 132 residues: Small ribosomal subunit protein uS8 (132 aa).

It belongs to the universal ribosomal protein uS8 family. In terms of assembly, part of the 30S ribosomal subunit. Contacts proteins S5 and S12.

Its function is as follows. One of the primary rRNA binding proteins, it binds directly to 16S rRNA central domain where it helps coordinate assembly of the platform of the 30S subunit. This Gluconacetobacter diazotrophicus (strain ATCC 49037 / DSM 5601 / CCUG 37298 / CIP 103539 / LMG 7603 / PAl5) protein is Small ribosomal subunit protein uS8.